Here is a 128-residue protein sequence, read N- to C-terminus: Diacylglycerol kinase (128 aa).

Glutamate 34 lines the a divalent metal cation pocket. 2 helical membrane passes run 35 to 55 and 58 to 78; these read SAFR…SYLA and FLEW…ELIN. The active-site Proton acceptor is the glutamate 75. Glutamate 82 contacts a divalent metal cation. Residues 107 to 127 form a helical membrane-spanning segment; that stretch reads QLIGLIFWTLIWGRYLLALYL.

It belongs to the bacterial diacylglycerol kinase family. Requires Mg(2+) as cofactor.

It localises to the cell inner membrane. It carries out the reaction a 1,2-diacyl-sn-glycerol + ATP = a 1,2-diacyl-sn-glycero-3-phosphate + ADP + H(+). Its function is as follows. Catalyzes the ATP-dependent phosphorylation of sn-l,2-diacylglycerol (DAG) to phosphatidic acid. Involved in the recycling of diacylglycerol produced as a by-product during membrane-derived oligosaccharide (MDO) biosynthesis. In Helicobacter pylori (strain ATCC 700392 / 26695) (Campylobacter pylori), this protein is Diacylglycerol kinase (dgkA).